A 103-amino-acid polypeptide reads, in one-letter code: Large ribosomal subunit protein bL21 (103 aa).

It belongs to the bacterial ribosomal protein bL21 family. Part of the 50S ribosomal subunit. Contacts protein L20.

In terms of biological role, this protein binds to 23S rRNA in the presence of protein L20. This is Large ribosomal subunit protein bL21 from Borreliella afzelii (strain PKo) (Borrelia afzelii).